The following is a 635-amino-acid chain: Glutamine--fructose-6-phosphate aminotransferase [isomerizing] (635 aa).

The active-site Nucleophile; for GATase activity is the Cys-2. In terms of domain architecture, Glutamine amidotransferase type-2 spans 2–218 (CGIVGMVAGR…EGDIADVHRD (217 aa)). 2 consecutive SIS domains span residues 299–439 (FERL…AKKI) and 472–625 (CARH…IDQP). The active-site For Fru-6P isomerization activity is Lys-630.

In terms of assembly, homodimer.

It localises to the cytoplasm. The enzyme catalyses D-fructose 6-phosphate + L-glutamine = D-glucosamine 6-phosphate + L-glutamate. Its function is as follows. Catalyzes the first step in hexosamine metabolism, converting fructose-6P into glucosamine-6P using glutamine as a nitrogen source. This is Glutamine--fructose-6-phosphate aminotransferase [isomerizing] from Treponema pallidum (strain Nichols).